A 504-amino-acid chain; its full sequence is Maturase K (504 aa).

This sequence belongs to the intron maturase 2 family. MatK subfamily.

The protein resides in the plastid. Its subcellular location is the chloroplast. In terms of biological role, usually encoded in the trnK tRNA gene intron. Probably assists in splicing its own and other chloroplast group II introns. This chain is Maturase K, found in Betula papyrifera (Paper birch).